Reading from the N-terminus, the 884-residue chain is Nonsense-mediated mRNA decay factor EBS1 (884 aa).

Disordered regions lie at residues 596 to 645 (NSMK…PTMG) and 755 to 774 (QGGLYSSQQPSSMSSLNSAY). Residues 633–645 (RSSSLDSFSPTMG) are compositionally biased toward polar residues. Low complexity predominate over residues 760–772 (SSQQPSSMSSLNS).

The protein belongs to the EST1 family. As to quaternary structure, interacts with NMD helicase UPF1. Interacts with CDC33.

The protein localises to the nucleus. The protein resides in the chromosome. It localises to the telomere. Its subcellular location is the cytoplasm. It is found in the P-body. Its function is as follows. Plays a role in nonsense-mediated mRNA decay (NMD). Recruits UPF1 to cytoplasmic mRNA decay bodies (P-bodies). Negative regulator of gene expression. Inhibits translation most likely through effects on eIF-4E (CDC33). Involved in telomere maintenance. The sequence is that of Nonsense-mediated mRNA decay factor EBS1 from Saccharomyces cerevisiae (strain ATCC 204508 / S288c) (Baker's yeast).